The following is a 424-amino-acid chain: Histidine--tRNA ligase (424 aa).

It belongs to the class-II aminoacyl-tRNA synthetase family. In terms of assembly, homodimer.

The protein localises to the cytoplasm. It carries out the reaction tRNA(His) + L-histidine + ATP = L-histidyl-tRNA(His) + AMP + diphosphate + H(+). The polypeptide is Histidine--tRNA ligase (Shewanella piezotolerans (strain WP3 / JCM 13877)).